We begin with the raw amino-acid sequence, 290 residues long: Undecaprenyl-diphosphatase (290 aa).

Transmembrane regions (helical) follow at residues 5–25 (IGIFEAIVLGFVQGITEYFPI), 44–64 (GTAYSAVIQLGSLLAVLTYFY), 88–108 (VRLFWGIILGTIPIVIAGLAL), 122–142 (LSVIAVASIVMAALLWLSESL), 152–172 (IRVIDGILIGCAQALALVPGV), 195–215 (FSFLLAIPAIFLSGLLELKVL), 226–246 (PIVAGFVSSTVFSYLAIAWLL), and 255–275 (LVFVIYRFFFGALLLGLLAAG).

Belongs to the UppP family.

It localises to the cell inner membrane. The catalysed reaction is di-trans,octa-cis-undecaprenyl diphosphate + H2O = di-trans,octa-cis-undecaprenyl phosphate + phosphate + H(+). Catalyzes the dephosphorylation of undecaprenyl diphosphate (UPP). Confers resistance to bacitracin. This Gloeobacter violaceus (strain ATCC 29082 / PCC 7421) protein is Undecaprenyl-diphosphatase.